A 306-amino-acid polypeptide reads, in one-letter code: Ribosomal protein L11 methyltransferase (306 aa).

Positions 154, 179, 201, and 242 each coordinate S-adenosyl-L-methionine.

The protein belongs to the methyltransferase superfamily. PrmA family.

It localises to the cytoplasm. It catalyses the reaction L-lysyl-[protein] + 3 S-adenosyl-L-methionine = N(6),N(6),N(6)-trimethyl-L-lysyl-[protein] + 3 S-adenosyl-L-homocysteine + 3 H(+). Its function is as follows. Methylates ribosomal protein L11. The polypeptide is Ribosomal protein L11 methyltransferase (Stenotrophomonas maltophilia (strain K279a)).